A 482-amino-acid chain; its full sequence is Glutamate--tRNA ligase 1 (482 aa).

A 'HIGH' region motif is present at residues 18-28 (PSPTGYLHLGG). The short motif at 252-256 (KLSKR) is the 'KMSKS' region element. K255 provides a ligand contact to ATP.

The protein belongs to the class-I aminoacyl-tRNA synthetase family. Glutamate--tRNA ligase type 1 subfamily. In terms of assembly, monomer.

It localises to the cytoplasm. It carries out the reaction tRNA(Glu) + L-glutamate + ATP = L-glutamyl-tRNA(Glu) + AMP + diphosphate. Its function is as follows. Catalyzes the attachment of glutamate to tRNA(Glu) in a two-step reaction: glutamate is first activated by ATP to form Glu-AMP and then transferred to the acceptor end of tRNA(Glu). The protein is Glutamate--tRNA ligase 1 of Erythrobacter litoralis (strain HTCC2594).